The primary structure comprises 146 residues: Transcriptional regulator MraZ (146 aa).

2 SpoVT-AbrB domains span residues His7–Leu54 and Gly83–Ala126.

It belongs to the MraZ family. Forms oligomers.

The protein resides in the cytoplasm. It localises to the nucleoid. In Rhizobium meliloti (strain 1021) (Ensifer meliloti), this protein is Transcriptional regulator MraZ.